Consider the following 335-residue polypeptide: Cathepsin B (335 aa).

Positions Met-1–Ala-17 are cleaved as a signal peptide. Residues Arg-18–Ile-79 constitute a propeptide, activation peptide. 6 cysteine pairs are disulfide-bonded: Cys-93–Cys-122, Cys-105–Cys-150, Cys-141–Cys-207, Cys-142–Cys-146, Cys-179–Cys-211, and Cys-187–Cys-198. Cys-108 is an active-site residue. Residue Asn-192 is glycosylated (N-linked (GlcNAc...) asparagine). The residue at position 220 (Lys-220) is an N6-acetyllysine. The cysteines at positions 227 and 331 are disulfide-linked. Active-site residues include His-278 and Asn-298. Residues Pro-333 to Phe-335 constitute a propeptide that is removed on maturation.

It belongs to the peptidase C1 family. In terms of assembly, dimer of a heavy chain and a light chain cross-linked by a disulfide bond. Interacts with SRPX2. Directly interacts with SHKBP1. In terms of tissue distribution, expressed in heart (at protein level).

The protein resides in the lysosome. Its subcellular location is the melanosome. It localises to the secreted. The protein localises to the extracellular space. It is found in the apical cell membrane. The enzyme catalyses Hydrolysis of proteins with broad specificity for peptide bonds. Preferentially cleaves -Arg-Arg-|-Xaa bonds in small molecule substrates (thus differing from cathepsin L). In addition to being an endopeptidase, shows peptidyl-dipeptidase activity, liberating C-terminal dipeptides.. In terms of biological role, thiol protease which is believed to participate in intracellular degradation and turnover of proteins. Cleaves matrix extracellular phosphoglycoprotein MEPE. Involved in the solubilization of cross-linked TG/thyroglobulin in the thyroid follicle lumen. Has also been implicated in tumor invasion and metastasis. This is Cathepsin B (CTSB) from Sus scrofa (Pig).